The primary structure comprises 127 residues: Histone H2A (127 aa).

Positions 1-20 (MSGRGKGGKAKTGGKAKSRS) are enriched in basic residues. Residues 1 to 23 (MSGRGKGGKAKTGGKAKSRSSRA) form a disordered region. Position 2 is an N-acetylserine (Ser-2). At Ser-2 the chain carries Phosphoserine. N6-acetyllysine; partial is present on residues Lys-6, Lys-9, and Lys-11. Residue Gln-106 is modified to N5-methylglutamine. Residue Lys-121 forms a Glycyl lysine isopeptide (Lys-Gly) (interchain with G-Cter in ubiquitin) linkage.

This sequence belongs to the histone H2A family. As to quaternary structure, the nucleosome is a histone octamer containing two molecules each of H2A, H2B, H3 and H4 assembled in one H3-H4 heterotetramer and two H2A-H2B heterodimers. The octamer wraps approximately 147 bp of DNA. Monoubiquitination of Lys-121 gives a specific tag for epigenetic transcriptional repression. Post-translationally, phosphorylation on Ser-2 is enhanced during mitosis. Phosphorylation on Ser-2 directly represses transcription.

It is found in the nucleus. The protein resides in the chromosome. Its function is as follows. Core component of nucleosome. Nucleosomes wrap and compact DNA into chromatin, limiting DNA accessibility to the cellular machineries which require DNA as a template. Histones thereby play a central role in transcription regulation, DNA repair, DNA replication and chromosomal stability. DNA accessibility is regulated via a complex set of post-translational modifications of histones, also called histone code, and nucleosome remodeling. This Caenorhabditis elegans protein is Histone H2A (his-3).